The primary structure comprises 92 residues: Large ribosomal subunit protein bL25 (92 aa).

Belongs to the bacterial ribosomal protein bL25 family. In terms of assembly, part of the 50S ribosomal subunit; part of the 5S rRNA/L5/L18/L25 subcomplex. Contacts the 5S rRNA. Binds to the 5S rRNA independently of L5 and L18.

In terms of biological role, this is one of the proteins that binds to the 5S RNA in the ribosome where it forms part of the central protuberance. The polypeptide is Large ribosomal subunit protein bL25 (Photobacterium profundum (strain SS9)).